Here is an 85-residue protein sequence, read N- to C-terminus: UPF0386 protein TM1040_0419 (85 aa).

The disordered stretch occupies residues 62–85 (SKSSRPYQISEKGRRSVRAQLDNR).

The protein belongs to the UPF0386 family.

This Ruegeria sp. (strain TM1040) (Silicibacter sp.) protein is UPF0386 protein TM1040_0419.